Reading from the N-terminus, the 909-residue chain is UPF0182 protein H16_A1615 (909 aa).

The next 7 helical transmembrane spans lie at 16–36, 58–78, 114–134, 169–189, 205–225, 246–266, and 281–301; these read TWVVAVIVALIAVSRVTGLVV, ALLFLAVFAVSAGALWLSGWL, VAVLVGLLMAVGELSSWAIAL, WLLLLLGCSAVLAGVVYGLRG, ATHGSALLGLFFALQAWSYWL, VHVGLPVLWLQVGLAAAAAAA, and AAALLVVGSAIVLGTIWPALF.

It belongs to the UPF0182 family.

The protein localises to the cell membrane. The chain is UPF0182 protein H16_A1615 from Cupriavidus necator (strain ATCC 17699 / DSM 428 / KCTC 22496 / NCIMB 10442 / H16 / Stanier 337) (Ralstonia eutropha).